A 156-amino-acid polypeptide reads, in one-letter code: ATP synthase subunit b (156 aa).

The helical transmembrane segment at 7 to 27 threads the bilayer; that stretch reads LFAQMVVFLILAWFTMKFVWP.

This sequence belongs to the ATPase B chain family. F-type ATPases have 2 components, F(1) - the catalytic core - and F(0) - the membrane proton channel. F(1) has five subunits: alpha(3), beta(3), gamma(1), delta(1), epsilon(1). F(0) has three main subunits: a(1), b(2) and c(10-14). The alpha and beta chains form an alternating ring which encloses part of the gamma chain. F(1) is attached to F(0) by a central stalk formed by the gamma and epsilon chains, while a peripheral stalk is formed by the delta and b chains.

Its subcellular location is the cell inner membrane. Its function is as follows. F(1)F(0) ATP synthase produces ATP from ADP in the presence of a proton or sodium gradient. F-type ATPases consist of two structural domains, F(1) containing the extramembraneous catalytic core and F(0) containing the membrane proton channel, linked together by a central stalk and a peripheral stalk. During catalysis, ATP synthesis in the catalytic domain of F(1) is coupled via a rotary mechanism of the central stalk subunits to proton translocation. In terms of biological role, component of the F(0) channel, it forms part of the peripheral stalk, linking F(1) to F(0). The sequence is that of ATP synthase subunit b from Paraburkholderia phytofirmans (strain DSM 17436 / LMG 22146 / PsJN) (Burkholderia phytofirmans).